Consider the following 215-residue polypeptide: Cytochrome b6 (215 aa).

A helical membrane pass occupies residues 32-52 (IFHCLGGITLTCFLVQVATGF). Position 35 (Cys-35) interacts with heme c. The heme b site is built by His-86 and His-100. Transmembrane regions (helical) follow at residues 90–110 (ASMM…TGGF), 116–136 (LTWV…VTGY), and 186–206 (LHTF…FPMI). His-187 and His-202 together coordinate heme b.

The protein belongs to the cytochrome b family. PetB subfamily. The 4 large subunits of the cytochrome b6-f complex are cytochrome b6, subunit IV (17 kDa polypeptide, PetD), cytochrome f and the Rieske protein, while the 4 small subunits are PetG, PetL, PetM and PetN. The complex functions as a dimer. Heme b is required as a cofactor. Heme c serves as cofactor.

It is found in the plastid. Its subcellular location is the chloroplast thylakoid membrane. In terms of biological role, component of the cytochrome b6-f complex, which mediates electron transfer between photosystem II (PSII) and photosystem I (PSI), cyclic electron flow around PSI, and state transitions. The chain is Cytochrome b6 from Calycanthus floridus var. glaucus (Eastern sweetshrub).